A 439-amino-acid polypeptide reads, in one-letter code: GTPase Der (439 aa).

EngA-type G domains are found at residues 4 to 168 (PIVA…KDDE) and 177 to 352 (INIA…DNYT). Residues 10–17 (GRPNVGKS), 57–61 (DTGGI), 120–123 (NKID), 183–190 (GKPNVGKS), 230–234 (DTAGL), and 295–298 (NKWD) each bind GTP. A KH-like domain is found at 353–437 (KRVKTGVLND…GIKLEFRERK (85 aa)).

This sequence belongs to the TRAFAC class TrmE-Era-EngA-EngB-Septin-like GTPase superfamily. EngA (Der) GTPase family. As to quaternary structure, associates with the 50S ribosomal subunit.

In terms of biological role, GTPase that plays an essential role in the late steps of ribosome biogenesis. In Clostridium botulinum (strain Kyoto / Type A2), this protein is GTPase Der.